A 334-amino-acid polypeptide reads, in one-letter code: Protein-glutamate methylesterase/protein-glutamine glutaminase 2 (334 aa).

In terms of domain architecture, Response regulatory spans 2 to 120 (NIGIVNDLPL…GAAGDTTKLL (119 aa)). D53 is modified (4-aspartylphosphate). The region spanning 134–334 (PGSSRLAGAA…AGELAALARI (201 aa)) is the CheB-type methylesterase domain. Catalysis depends on residues S157, H184, and D277.

Belongs to the CheB family. Phosphorylated by CheA. Phosphorylation of the N-terminal regulatory domain activates the methylesterase activity.

The protein resides in the cytoplasm. It catalyses the reaction [protein]-L-glutamate 5-O-methyl ester + H2O = L-glutamyl-[protein] + methanol + H(+). The catalysed reaction is L-glutaminyl-[protein] + H2O = L-glutamyl-[protein] + NH4(+). Its function is as follows. Involved in chemotaxis. Part of a chemotaxis signal transduction system that modulates chemotaxis in response to various stimuli. Catalyzes the demethylation of specific methylglutamate residues introduced into the chemoreceptors (methyl-accepting chemotaxis proteins or MCP) by CheR. Also mediates the irreversible deamidation of specific glutamine residues to glutamic acid. In Burkholderia orbicola (strain AU 1054), this protein is Protein-glutamate methylesterase/protein-glutamine glutaminase 2.